We begin with the raw amino-acid sequence, 452 residues long: MPGSEMPAPCVFAPDMAEQVPLWHHYLLAIQSRESPRVQDYQRAENILLTVLERVHALDSRFIVDYSRDLEAFQFALRSSEDPLDVEVLLGVDSEALLIEESEATEPGDGPAICRLGVLKEASGLEPWMTADIFSVSSEDRDKCCGHLVPSKVLCVLKDLLVAAIVHCKHHRLIPPGSLNAANLKEGQMRLSLLVSSGWRKIRFNVVPVVRKKHRVPALEGAQLKLGFPEGILRRIASHGVDLVPANAQHWRISTGYLLSRLLDALGSLPGHRLDSLSILDRVNLESWQGGSQNHGLTFDHLKTVLLWASTLFPAPEDWADLQGSVYRQLVVLLCCLATRKLPHFLYPEHNLLQDGGLDLGAIYQRVEHFASQPEESLRIHVTHLGPSRPPRIDNGVKALLQLPASDPTYWATAYFDFLLDKFQVFNIQDKDRISAMQNIFQKTKTMGSENS.

The protein is Protein mab-21-like 4 (Mab21l4) of Mus musculus (Mouse).